The following is a 440-amino-acid chain: Glutamyl-tRNA reductase (440 aa).

Substrate contacts are provided by residues 50–53 (TCNR), Ser-109, 114–116 (EPQ), and Gln-120. Cys-51 functions as the Nucleophile in the catalytic mechanism. 189–194 (GAGEMA) is an NADP(+) binding site.

This sequence belongs to the glutamyl-tRNA reductase family. Homodimer.

It carries out the reaction (S)-4-amino-5-oxopentanoate + tRNA(Glu) + NADP(+) = L-glutamyl-tRNA(Glu) + NADPH + H(+). It functions in the pathway porphyrin-containing compound metabolism; protoporphyrin-IX biosynthesis; 5-aminolevulinate from L-glutamyl-tRNA(Glu): step 1/2. Functionally, catalyzes the NADPH-dependent reduction of glutamyl-tRNA(Glu) to glutamate 1-semialdehyde (GSA). This chain is Glutamyl-tRNA reductase, found in Nitratidesulfovibrio vulgaris (strain ATCC 29579 / DSM 644 / CCUG 34227 / NCIMB 8303 / VKM B-1760 / Hildenborough) (Desulfovibrio vulgaris).